The primary structure comprises 579 residues: uncharacterized protein (579 aa).

This sequence belongs to the UbiD family.

This is an uncharacterized protein from Chlamydia trachomatis serovar D (strain ATCC VR-885 / DSM 19411 / UW-3/Cx).